The primary structure comprises 336 residues: Large ribosomal subunit protein uL3 (336 aa).

3 disordered regions span residues Met-1–Ala-43, Ile-205–Gln-230, and Arg-311–Gly-336. Residues Gly-219–Gln-230 show a composition bias toward basic residues.

This sequence belongs to the universal ribosomal protein uL3 family. As to quaternary structure, part of the 50S ribosomal subunit. Forms a cluster with proteins L14 and L24e.

Its function is as follows. One of the primary rRNA binding proteins, it binds directly near the 3'-end of the 23S rRNA, where it nucleates assembly of the 50S subunit. This is Large ribosomal subunit protein uL3 from Natronomonas pharaonis (strain ATCC 35678 / DSM 2160 / CIP 103997 / JCM 8858 / NBRC 14720 / NCIMB 2260 / Gabara) (Halobacterium pharaonis).